The primary structure comprises 425 residues: Receptor-like protein 55 (425 aa).

The signal sequence occupies residues 1–25; the sequence is MKPQQPQPPLLLLLLLPLLLTTVSS. At 26 to 397 the chain is on the extracellular side; it reads YPLNPKQLKA…EEEHKGSNKT (372 aa). N-linked (GlcNAc...) asparagine glycans are attached at residues asparagine 40, asparagine 54, asparagine 79, and asparagine 132. LRR repeat units lie at residues 144 to 169, 170 to 193, 195 to 216, 217 to 240, 242 to 264, 265 to 287, and 288 to 313; these read LKNLKTLYISSTPIQTSRRLYVILGN, MHKLTSLTISNSNLTGLIPKSFHS, LRYIDLSNNSLKGSIRISITRL, KNLKSLNLSHNSLSGQIPNKIKSL, FLKNLSLASNKLSGTIPNSLSSI, SELTHLDLSMNQLNGTVPSFFSE, and MKNLKHLNLADNSFHGVLPFNESFIK. Asparagine 182, asparagine 202, asparagine 223, asparagine 245, asparagine 278, asparagine 308, and asparagine 329 each carry an N-linked (GlcNAc...) asparagine glycan. The disordered stretch occupies residues 355–389; it reads PSQKEESLSGENDYDVEGGNEEKTENLKTKEEEEE. Residues 374–389 show a composition bias toward basic and acidic residues; that stretch reads NEEKTENLKTKEEEEE. N-linked (GlcNAc...) asparagine glycosylation occurs at asparagine 395. A helical transmembrane segment spans residues 398 to 418; sequence LFGLGIGLFSLVFLILFLFYL. The Cytoplasmic segment spans residues 419–425; it reads AKRCRLI.

This sequence belongs to the RLP family.

It is found in the cell membrane. Functionally, involved in plant defense. The sequence is that of Receptor-like protein 55 from Arabidopsis thaliana (Mouse-ear cress).